The chain runs to 397 residues: MDRNQRPRSILDSLGEELIAILTPVSICMFTVVLLVCILNSDPSSSSASFSSIATAAYSESDSDSSWDKFVGALLNSVVFVAAITVATFVLVLLFYLRCVKFLKFYMGFSAFIVLGNLGGEILVLLIDRFRFPIDSITFLILLFNFSVVGVFAVFMSKFSILITQGYLVWIGVLVAYFFTLLPEWTTWVLLVALALYDIAAVLLPVGPLRLLVEMAISRDEDIPALVYEARPVIRNDSRSVQRRVWREQRSSQNNANRNEVRVVESAEVEEEHVGSSERAEISVPLIDRRPEQAENSETFLEGIGLGSSGAIKLGLGDFIFYSVLVGRAAMYDLMTVYACYLAIIAGLGITLMLLSVYQKALPALPVSIMLGVVFYFLARLLLEVFVVQCSSNLVMF.

Over 1 to 17 (MDRNQRPRSILDSLGEE) the chain is Cytoplasmic. A helical transmembrane segment spans residues 18–38 (LIAILTPVSICMFTVVLLVCI). The Lumenal segment spans residues 39-76 (LNSDPSSSSASFSSIATAAYSESDSDSSWDKFVGALLN). A helical transmembrane segment spans residues 77–97 (SVVFVAAITVATFVLVLLFYL). Residues 98 to 106 (RCVKFLKFY) are Cytoplasmic-facing. A helical transmembrane segment spans residues 107-127 (MGFSAFIVLGNLGGEILVLLI). Over 128-135 (DRFRFPID) the chain is Lumenal. The chain crosses the membrane as a helical span at residues 136–156 (SITFLILLFNFSVVGVFAVFM). The Cytoplasmic segment spans residues 157–158 (SK). Residues 159-179 (FSILITQGYLVWIGVLVAYFF) traverse the membrane as a helical segment. Topologically, residues 180–188 (TLLPEWTTW) are lumenal. A helical membrane pass occupies residues 189-209 (VLLVALALYDIAAVLLPVGPL). Residue D198 is part of the active site. Over 210-305 (RLLVEMAISR…NSETFLEGIG (96 aa)) the chain is Cytoplasmic. The chain crosses the membrane as a helical span at residues 306–326 (LGSSGAIKLGLGDFIFYSVLV). Residue D318 is part of the active site. The Lumenal segment spans residues 327–336 (GRAAMYDLMT). The chain crosses the membrane as a helical span at residues 337–357 (VYACYLAIIAGLGITLMLLSV). The Cytoplasmic portion of the chain corresponds to 358 to 366 (YQKALPALP). Positions 363–365 (PAL) match the PAL motif. The segment at residues 367–387 (VSIMLGVVFYFLARLLLEVFV) is an intramembrane region (helical). Residues 388–397 (VQCSSNLVMF) are Cytoplasmic-facing.

The protein belongs to the peptidase A22A family. In terms of assembly, homodimer. Probable component of the gamma-secretase complex, a complex composed of a presenilin homodimer, nicastrin, APH1 and PEN2.

It is found in the endoplasmic reticulum membrane. The protein resides in the golgi apparatus membrane. Probable subunit of the gamma-secretase complex, an endoprotease complex that catalyzes the intramembrane cleavage of integral membrane proteins such as Notch receptors. This chain is Presenilin-like protein At2g29900, found in Arabidopsis thaliana (Mouse-ear cress).